A 702-amino-acid chain; its full sequence is Threonine--tRNA ligase (702 aa).

The segment at 1–30 (MSAPVHPVPGADGGDPLRPATPGLRSPQVP) is disordered. The region spanning 15-84 (DPLRPATPGL…DVDVEVTPVP (70 aa)) is the TGS domain. Residues 279-585 (DHRKLGIELD…LTEHYAGAFP (307 aa)) form a catalytic region. The Zn(2+) site is built by Cys-384, His-435, and His-562.

Belongs to the class-II aminoacyl-tRNA synthetase family. As to quaternary structure, homodimer. It depends on Zn(2+) as a cofactor.

It localises to the cytoplasm. The enzyme catalyses tRNA(Thr) + L-threonine + ATP = L-threonyl-tRNA(Thr) + AMP + diphosphate + H(+). Catalyzes the attachment of threonine to tRNA(Thr) in a two-step reaction: L-threonine is first activated by ATP to form Thr-AMP and then transferred to the acceptor end of tRNA(Thr). Also edits incorrectly charged L-seryl-tRNA(Thr). This Mycobacterium leprae (strain Br4923) protein is Threonine--tRNA ligase.